The chain runs to 93 residues: Small ribosomal subunit protein uS19 (93 aa).

This sequence belongs to the universal ribosomal protein uS19 family.

Functionally, protein S19 forms a complex with S13 that binds strongly to the 16S ribosomal RNA. This Symbiobacterium thermophilum (strain DSM 24528 / JCM 14929 / IAM 14863 / T) protein is Small ribosomal subunit protein uS19.